We begin with the raw amino-acid sequence, 324 residues long: MKSISCGKEYTEDVRNINIRPEQLDDFVGQKDLIQNLKVFINAAQTRTEALDHVLLYGPPGLGKTTLAQIVSKELRVSFRATSGPLLSKAGDLAAVLTTLNAKDVLFIDEIHRLNRSIEEVLYTAMEDFCLDILVGEGPSTRTLRIDLPPFTLIGATTRLGLLSAPLRDRFGIPLHLEFYSFEELVNIIKRGARVLSAEIEEDAAREIACRARGTPRIALRLLRRIRDFVEVKDDKKITYEVADSVLLKLGVDKMGLNKLDMNYLRFLFNTSGPVGIDTISIALSEDVGNIEETVEPYLIKISFVKRTPRGRVLTDQAKEYLSL.

Positions 1 to 180 (MKSISCGKEY…FGIPLHLEFY (180 aa)) are large ATPase domain (RuvB-L). ATP is bound by residues Ile19, Arg20, Gly61, Lys64, Thr65, Thr66, 127 to 129 (EDF), Arg170, Tyr180, and Arg217. Thr65 provides a ligand contact to Mg(2+). Residues 181 to 251 (SFEELVNIIK…VADSVLLKLG (71 aa)) form a small ATPAse domain (RuvB-S) region. A head domain (RuvB-H) region spans residues 254 to 324 (KMGLNKLDMN…TDQAKEYLSL (71 aa)). DNA contacts are provided by Arg307 and Arg312.

Belongs to the RuvB family. In terms of assembly, homohexamer. Forms an RuvA(8)-RuvB(12)-Holliday junction (HJ) complex. HJ DNA is sandwiched between 2 RuvA tetramers; dsDNA enters through RuvA and exits via RuvB. An RuvB hexamer assembles on each DNA strand where it exits the tetramer. Each RuvB hexamer is contacted by two RuvA subunits (via domain III) on 2 adjacent RuvB subunits; this complex drives branch migration. In the full resolvosome a probable DNA-RuvA(4)-RuvB(12)-RuvC(2) complex forms which resolves the HJ.

Its subcellular location is the cytoplasm. It catalyses the reaction ATP + H2O = ADP + phosphate + H(+). In terms of biological role, the RuvA-RuvB-RuvC complex processes Holliday junction (HJ) DNA during genetic recombination and DNA repair, while the RuvA-RuvB complex plays an important role in the rescue of blocked DNA replication forks via replication fork reversal (RFR). RuvA specifically binds to HJ cruciform DNA, conferring on it an open structure. The RuvB hexamer acts as an ATP-dependent pump, pulling dsDNA into and through the RuvAB complex. RuvB forms 2 homohexamers on either side of HJ DNA bound by 1 or 2 RuvA tetramers; 4 subunits per hexamer contact DNA at a time. Coordinated motions by a converter formed by DNA-disengaged RuvB subunits stimulates ATP hydrolysis and nucleotide exchange. Immobilization of the converter enables RuvB to convert the ATP-contained energy into a lever motion, pulling 2 nucleotides of DNA out of the RuvA tetramer per ATP hydrolyzed, thus driving DNA branch migration. The RuvB motors rotate together with the DNA substrate, which together with the progressing nucleotide cycle form the mechanistic basis for DNA recombination by continuous HJ branch migration. Branch migration allows RuvC to scan DNA until it finds its consensus sequence, where it cleaves and resolves cruciform DNA. The chain is Holliday junction branch migration complex subunit RuvB from Wolbachia sp. subsp. Drosophila simulans (strain wRi).